The following is a 498-amino-acid chain: ATP synthase subunit beta, chloroplastic (498 aa).

An ATP-binding site is contributed by 172 to 179; it reads GGAGVGKT.

Belongs to the ATPase alpha/beta chains family. As to quaternary structure, F-type ATPases have 2 components, CF(1) - the catalytic core - and CF(0) - the membrane proton channel. CF(1) has five subunits: alpha(3), beta(3), gamma(1), delta(1), epsilon(1). CF(0) has four main subunits: a(1), b(1), b'(1) and c(9-12).

It is found in the plastid. The protein localises to the chloroplast thylakoid membrane. It catalyses the reaction ATP + H2O + 4 H(+)(in) = ADP + phosphate + 5 H(+)(out). Produces ATP from ADP in the presence of a proton gradient across the membrane. The catalytic sites are hosted primarily by the beta subunits. This chain is ATP synthase subunit beta, chloroplastic, found in Nicotiana rustica (Aztec tobacco).